The sequence spans 365 residues: MEMVRPAARRSVGETQPPLPSIYSLTLDELKEWLVAQGEKPFRATQIYEWLYQNRVTDFADMTNLPKRLREQLASSFSITTLKTVVKQTSKDGTIKFLFELHDGYSIETVLMRHNYGNSVCVTTQVGCRIGCTFCASTLGGLKRHLEAGEIVAQVVQVQKALDDTNERVSSIVVMGIGEPFDNYDALIKFLRIVNHPKGLNIGARHITVSTSGIIPKIYQFADEGMQINFAISLHAPTNELRTKLMPINKAYPLPKLMEAVRYYIEKTGRRVTFEYGLFGGVNDQLEHAEQLAELIKGLKCHVNLIPVNYVPERNYVRTPRSQIFAFERALKKHGINVTIRREHGHDIDAACGQLRAKERKEETR.

Catalysis depends on glutamate 108, which acts as the Proton acceptor. Positions 114–347 (HNYGNSVCVT…VTIRREHGHD (234 aa)) constitute a Radical SAM core domain. A disulfide bond links cysteine 121 and cysteine 352. [4Fe-4S] cluster contacts are provided by cysteine 128, cysteine 132, and cysteine 135. S-adenosyl-L-methionine-binding positions include 178 to 179 (GE), serine 210, 233 to 235 (SLH), and asparagine 309. The active-site S-methylcysteine intermediate is the cysteine 352.

Belongs to the radical SAM superfamily. RlmN family. Requires [4Fe-4S] cluster as cofactor.

Its subcellular location is the cytoplasm. The enzyme catalyses adenosine(2503) in 23S rRNA + 2 reduced [2Fe-2S]-[ferredoxin] + 2 S-adenosyl-L-methionine = 2-methyladenosine(2503) in 23S rRNA + 5'-deoxyadenosine + L-methionine + 2 oxidized [2Fe-2S]-[ferredoxin] + S-adenosyl-L-homocysteine. The catalysed reaction is adenosine(37) in tRNA + 2 reduced [2Fe-2S]-[ferredoxin] + 2 S-adenosyl-L-methionine = 2-methyladenosine(37) in tRNA + 5'-deoxyadenosine + L-methionine + 2 oxidized [2Fe-2S]-[ferredoxin] + S-adenosyl-L-homocysteine. Its function is as follows. Specifically methylates position 2 of adenine 2503 in 23S rRNA and position 2 of adenine 37 in tRNAs. The polypeptide is Probable dual-specificity RNA methyltransferase RlmN (Geobacillus kaustophilus (strain HTA426)).